Consider the following 163-residue polypeptide: Peptide methionine sulfoxide reductase MsrA (163 aa).

C10 is a catalytic residue.

This sequence belongs to the MsrA Met sulfoxide reductase family.

The catalysed reaction is L-methionyl-[protein] + [thioredoxin]-disulfide + H2O = L-methionyl-(S)-S-oxide-[protein] + [thioredoxin]-dithiol. It carries out the reaction [thioredoxin]-disulfide + L-methionine + H2O = L-methionine (S)-S-oxide + [thioredoxin]-dithiol. Has an important function as a repair enzyme for proteins that have been inactivated by oxidation. Catalyzes the reversible oxidation-reduction of methionine sulfoxide in proteins to methionine. This is Peptide methionine sulfoxide reductase MsrA from Vesicomyosocius okutanii subsp. Calyptogena okutanii (strain HA).